A 461-amino-acid polypeptide reads, in one-letter code: Type IV secretion system protein PtlD homolog (461 aa).

Positions 1-24 (MAGLSRILLSCTLACLLAGQAAQA) are cleaved as a signal peptide. The next 5 membrane-spanning stretches (helical) occupy residues 118 to 138 (LQPLVYSMMTLLVLLTGYALL), 232 to 252 (WLLCAMIVAASAGGWLCLAAS), 253 to 273 (LLIVPGLIVTLLLSLGPLFLV), 294 to 314 (ALVFMALGTPAVGLLSDVLAG), and 333 to 353 (MLAATLCATATLMLLTLVPLA). Low complexity predominate over residues 376 to 411 (AHRQAAARQYAPRPAAAAAAAGPHQAGTYAASATPA). Residues 376-461 (AHRQAAARQY…RVLPRKPNLP (86 aa)) form a disordered region. Over residues 439–453 (VRRDDRPAPAPDRRV) the composition is skewed to basic and acidic residues.

It localises to the cell membrane. This Bordetella bronchiseptica (strain ATCC BAA-588 / NCTC 13252 / RB50) (Alcaligenes bronchisepticus) protein is Type IV secretion system protein PtlD homolog (ptlD).